Consider the following 492-residue polypeptide: UDP-N-acetylmuramoyl-L-alanyl-D-glutamate--2,6-diaminopimelate ligase (492 aa).

Ser-30 contacts UDP-N-acetyl-alpha-D-muramoyl-L-alanyl-D-glutamate. 114 to 120 (GTNGKTS) lines the ATP pocket. Residues 156 to 157 (TT), Ser-183, Gln-189, and Arg-191 contribute to the UDP-N-acetyl-alpha-D-muramoyl-L-alanyl-D-glutamate site. At Lys-223 the chain carries N6-carboxylysine. Meso-2,6-diaminopimelate is bound by residues Arg-389, 413–416 (DNPR), Gly-462, and Glu-466. Residues 413–416 (DNPR) carry the Meso-diaminopimelate recognition motif motif.

Belongs to the MurCDEF family. MurE subfamily. Mg(2+) is required as a cofactor. Post-translationally, carboxylation is probably crucial for Mg(2+) binding and, consequently, for the gamma-phosphate positioning of ATP.

Its subcellular location is the cytoplasm. The enzyme catalyses UDP-N-acetyl-alpha-D-muramoyl-L-alanyl-D-glutamate + meso-2,6-diaminopimelate + ATP = UDP-N-acetyl-alpha-D-muramoyl-L-alanyl-gamma-D-glutamyl-meso-2,6-diaminopimelate + ADP + phosphate + H(+). Its pathway is cell wall biogenesis; peptidoglycan biosynthesis. Functionally, catalyzes the addition of meso-diaminopimelic acid to the nucleotide precursor UDP-N-acetylmuramoyl-L-alanyl-D-glutamate (UMAG) in the biosynthesis of bacterial cell-wall peptidoglycan. The polypeptide is UDP-N-acetylmuramoyl-L-alanyl-D-glutamate--2,6-diaminopimelate ligase (Neisseria meningitidis serogroup A / serotype 4A (strain DSM 15465 / Z2491)).